Reading from the N-terminus, the 303-residue chain is N-acetyl-D-glucosamine kinase (303 aa).

ATP-binding positions include 4 to 11 (GFDIGGTK) and 133 to 140 (GVGGGLVL). Residues histidine 157, cysteine 177, cysteine 179, and cysteine 184 each contribute to the Zn(2+) site.

The protein belongs to the ROK (NagC/XylR) family. NagK subfamily.

The catalysed reaction is N-acetyl-D-glucosamine + ATP = N-acetyl-D-glucosamine 6-phosphate + ADP + H(+). It functions in the pathway cell wall biogenesis; peptidoglycan recycling. Functionally, catalyzes the phosphorylation of N-acetyl-D-glucosamine (GlcNAc) derived from cell-wall degradation, yielding GlcNAc-6-P. This is N-acetyl-D-glucosamine kinase from Salmonella heidelberg (strain SL476).